A 408-amino-acid polypeptide reads, in one-letter code: Ribonuclease T2-like (408 aa).

Residues 1-25 (MLQSIPGPQHILKALTGSLGLSTIF) form the signal peptide. Cystine bridges form between cysteine 38–cysteine 56, cysteine 45–cysteine 92, cysteine 55–cysteine 158, and cysteine 100–cysteine 150. The active site involves histidine 85. Asparagine 108 is a glycosylation site (N-linked (GlcNAc...) asparagine). Active-site residues include glutamate 143 and histidine 147. Asparagine 173 is a glycosylation site (N-linked (GlcNAc...) asparagine). Cysteines 222 and 257 form a disulfide. Residues 268-292 (KHREPSRTTDTPSQPTTTGTPFKGR) form a disordered region. Low complexity predominate over residues 275–288 (TTDTPSQPTTTGTP). The N-linked (GlcNAc...) asparagine glycan is linked to asparagine 372.

The protein belongs to the RNase T2 family.

It localises to the vacuole lumen. It is found in the cytoplasm. It carries out the reaction a ribonucleotidyl-ribonucleotide-RNA + H2O = a 3'-end 3'-phospho-ribonucleotide-RNA + a 5'-end dephospho-ribonucleoside-RNA + H(+). Rnase which modulates cell survival under stress conditions. Released from the vacuole to the cytoplasm during stress to promote tRNA and rRNA cleavage and to activate separately a downstream pathway that promotes cell death. Involved in cell size, vacuolar morphology and growth at high temperatures and high salt concentration. The protein is Ribonuclease T2-like (rny1) of Aspergillus fumigatus (strain ATCC MYA-4609 / CBS 101355 / FGSC A1100 / Af293) (Neosartorya fumigata).